The following is a 670-amino-acid chain: Transcription factor Ken 2 (670 aa).

The BTB domain maps to 108–176 (TDLLLICDGK…LYSGQVYVRS (69 aa)). Disordered stretches follow at residues 200–288 (SDGS…DRDR) and 307–470 (NNHP…SDDA). Polar residues predominate over residues 218-230 (NRNTEGITGSSVV). A compositionally biased stretch (basic residues) spans 325–338 (HHLHHHHHHHHRQL). Composition is skewed to gly residues over residues 351–368 (GGGS…GESG) and 389–400 (SGGGGAGSGRRS). Over residues 407-419 (EPAEDDEDYELDV) the composition is skewed to acidic residues. A compositionally biased stretch (polar residues) spans 451–464 (SDPVNLSIVKQQQD). The C2H2-type 1; degenerate zinc finger occupies 586 to 594 (NLKTHLRVH). C2H2-type zinc fingers lie at residues 600-623 (FACR…CSVH) and 636-658 (YTCC…LSGH).

It is found in the nucleus. In terms of biological role, transcription factor required for terminalia development. Negative regulator of the JAK/STAT pathway: represses JAK/STAT-dependent expression of ventral veins lacking (vvl) in the posterior spiracles. This is Transcription factor Ken 2 from Culex quinquefasciatus (Southern house mosquito).